The sequence spans 697 residues: Potassium-transporting ATPase ATP-binding subunit (697 aa).

A run of 4 helical transmembrane segments spans residues 55–75 (PIMFVVEIGFVITFILSFFPS), 79–99 (SIPGWFNITVSLILLFTVLFA), 245–265 (LTLIFLIVVVTLPIFTNYLGF), and 271–291 (VLVALLVCLIPTTIGGLLSAI). The active-site 4-aspartylphosphate intermediate is Asp324. Residues Asp361, Glu365, 393–400 (FKAETRMS), and Lys412 each bind ATP. Asp535 and Asp539 together coordinate Mg(2+). Transmembrane regions (helical) follow at residues 605–625 (FAIIPAMFTLAIPQMEALNIM), 633–653 (AILSALLFNAVIIPLLIPLAM), and 677–697 (GGVIVPFIGIKVIDIIVGLFI).

It belongs to the cation transport ATPase (P-type) (TC 3.A.3) family. Type IA subfamily. As to quaternary structure, the system is composed of three essential subunits: KdpA, KdpB and KdpC.

The protein localises to the cell membrane. It carries out the reaction K(+)(out) + ATP + H2O = K(+)(in) + ADP + phosphate + H(+). Its function is as follows. Part of the high-affinity ATP-driven potassium transport (or Kdp) system, which catalyzes the hydrolysis of ATP coupled with the electrogenic transport of potassium into the cytoplasm. This subunit is responsible for energy coupling to the transport system and for the release of the potassium ions to the cytoplasm. This Bacillus cereus (strain AH820) protein is Potassium-transporting ATPase ATP-binding subunit.